A 407-amino-acid chain; its full sequence is Zinc finger protein 174 (407 aa).

The segment at 1–20 (MAAKMEITLSSNTEASSKQE) is disordered. A Glycyl lysine isopeptide (Lys-Gly) (interchain with G-Cter in SUMO2) cross-link involves residue K26. Positions 59–124 (GPQEALSQLR…KEIVTLVEDF (66 aa)) constitute an SCAN box domain. The tract at residues 150–270 (GSQLGEQELP…RRQVSSPNAQ (121 aa)) is disordered. A Glycyl lysine isopeptide (Lys-Gly) (interchain with G-Cter in SUMO2) cross-link involves residue K204. Basic and acidic residues predominate over residues 211–221 (PRMRSDNKENP). Glycyl lysine isopeptide (Lys-Gly) (interchain with G-Cter in SUMO2) cross-links involve residues K230 and K271. C2H2-type zinc fingers lie at residues 326-348 (YKCD…KRVH), 354-376 (YTCG…QRIH), and 382-405 (YQCG…RLHH).

Belongs to the krueppel C2H2-type zinc-finger protein family. In terms of assembly, homodimer. As to expression, expressed in a variety of organs, but most strongly in adult testis and ovary followed by small intestine, colon, prostate, thymus, spleen, pancreas, skeletal muscle, heart, brain and kidney. Also expressed in umbilical vein endothelial cells, foreskin fibroblast and Hep-G2 cells.

The protein localises to the nucleus. Transcriptional repressor. In Homo sapiens (Human), this protein is Zinc finger protein 174 (ZNF174).